Consider the following 217-residue polypeptide: MTAPLTLALSKGRIFEETLPLLAAAGVQVAEDPETSRKLILPTTDPNLRVIIVRASDVPTYVEYGAADFGVAGKDVLVEHGGSGLYQPIDLNIARCRMSVAVPAGFDYANAVRQGARLRVATKYVETAREHFAAKGVHVDLIKLYGSMELAPLVGLADAIVDLVSSGGTLKANNLVEVEEIMAISSRLVVNQAALKLKRAALKPILDAFERASQNGN.

The protein belongs to the ATP phosphoribosyltransferase family. Short subfamily. In terms of assembly, heteromultimer composed of HisG and HisZ subunits.

The protein resides in the cytoplasm. The catalysed reaction is 1-(5-phospho-beta-D-ribosyl)-ATP + diphosphate = 5-phospho-alpha-D-ribose 1-diphosphate + ATP. Its pathway is amino-acid biosynthesis; L-histidine biosynthesis; L-histidine from 5-phospho-alpha-D-ribose 1-diphosphate: step 1/9. Its function is as follows. Catalyzes the condensation of ATP and 5-phosphoribose 1-diphosphate to form N'-(5'-phosphoribosyl)-ATP (PR-ATP). Has a crucial role in the pathway because the rate of histidine biosynthesis seems to be controlled primarily by regulation of HisG enzymatic activity. This Burkholderia ambifaria (strain MC40-6) protein is ATP phosphoribosyltransferase.